The sequence spans 415 residues: Histidine--tRNA ligase (415 aa).

This sequence belongs to the class-II aminoacyl-tRNA synthetase family. Homodimer.

It localises to the cytoplasm. It carries out the reaction tRNA(His) + L-histidine + ATP = L-histidyl-tRNA(His) + AMP + diphosphate + H(+). The chain is Histidine--tRNA ligase from Clostridium botulinum (strain 657 / Type Ba4).